The sequence spans 126 residues: Large ribosomal subunit protein mL52 (126 aa).

The transit peptide at 1–28 (MLKITKICLASSATSTAQRSIALTAPRA) directs the protein to the mitochondrion.

This sequence belongs to the mitochondrion-specific ribosomal protein mL52 family. In terms of assembly, component of the mitochondrial ribosome large subunit (39S) which comprises a 16S rRNA and about 50 distinct proteins.

The protein localises to the mitochondrion. This Drosophila melanogaster (Fruit fly) protein is Large ribosomal subunit protein mL52 (mRpL52).